Consider the following 367-residue polypeptide: Mitochondrial GTPase 1 (367 aa).

In terms of domain architecture, CP-type G spans 42 to 228 (LKTFEKLLPQ…LIDTPGIGVP (187 aa)). GTP contacts are provided by residues 89 to 92 (TRKD), 160 to 165 (NVGKST), and Gly224.

This sequence belongs to the TRAFAC class YlqF/YawG GTPase family. MTG1 subfamily.

The protein localises to the mitochondrion inner membrane. Mitochondrial GTPase involved in assembly of the large ribosomal subunit. Plays a role in expression of the mitochondrial translational machinery. The polypeptide is Mitochondrial GTPase 1 (MTG1) (Saccharomyces cerevisiae (strain ATCC 204508 / S288c) (Baker's yeast)).